A 334-amino-acid chain; its full sequence is Anthranilate phosphoribosyltransferase (334 aa).

Residues glycine 79, 82 to 83 (GD), serine 87, 89 to 92 (NIST), 107 to 115 (KHGNRSISS), and serine 119 each bind 5-phospho-alpha-D-ribose 1-diphosphate. Glycine 79 contributes to the anthranilate binding site. Serine 91 is a binding site for Mg(2+). An anthranilate-binding site is contributed by asparagine 110. Residue arginine 165 coordinates anthranilate. Mg(2+)-binding residues include aspartate 224 and glutamate 225.

This sequence belongs to the anthranilate phosphoribosyltransferase family. Homodimer. Mg(2+) serves as cofactor.

The enzyme catalyses N-(5-phospho-beta-D-ribosyl)anthranilate + diphosphate = 5-phospho-alpha-D-ribose 1-diphosphate + anthranilate. It functions in the pathway amino-acid biosynthesis; L-tryptophan biosynthesis; L-tryptophan from chorismate: step 2/5. Its function is as follows. Catalyzes the transfer of the phosphoribosyl group of 5-phosphorylribose-1-pyrophosphate (PRPP) to anthranilate to yield N-(5'-phosphoribosyl)-anthranilate (PRA). The protein is Anthranilate phosphoribosyltransferase of Streptococcus pneumoniae serotype 19F (strain G54).